Here is a 475-residue protein sequence, read N- to C-terminus: MSYELVVGLEVHCQLNTNSKAFCGCSTEFGKPANTNVCPVCLALPGALPVLNRRVVEDAVKLGLATDCTVARQSILARKNYFYPDLPKGYQISQFEEPICSEGMVFVDTDEGRKNIRLVRIHIEEDAGKSIHDIGDDTFIDVNRCGVPLLEIVSYPDIRSAGEASSYLQKLRQIIKYLGISDGNMEEGSLRCDANVSVRLTGAEEYGTRTEIKNMNSFKNVEKAIEYEAKRHIDVLENGGTIFQETRLWDADRQETRSMRGKEFAHDYRYFPDPDLVPIEVDEEMLDRLKQELPELPEVRAERFVRETGIPAYDAGVLTSEREVADYFEKVVRACGDAKAASNWVMGEVLRTLKEKNIPVALFSVSPERLGGLLNLIGKGTISTTIAKQVFERMLETGDDAAAIVEKEGLAQISDTTEIETLVQDIIEANPGQVEQYRSGKTRIFGFFVGQCMKAMKGKANPVVVNEILKQKLDG.

This sequence belongs to the GatB/GatE family. GatB subfamily. In terms of assembly, heterotrimer of A, B and C subunits.

The enzyme catalyses L-glutamyl-tRNA(Gln) + L-glutamine + ATP + H2O = L-glutaminyl-tRNA(Gln) + L-glutamate + ADP + phosphate + H(+). It carries out the reaction L-aspartyl-tRNA(Asn) + L-glutamine + ATP + H2O = L-asparaginyl-tRNA(Asn) + L-glutamate + ADP + phosphate + 2 H(+). Its function is as follows. Allows the formation of correctly charged Asn-tRNA(Asn) or Gln-tRNA(Gln) through the transamidation of misacylated Asp-tRNA(Asn) or Glu-tRNA(Gln) in organisms which lack either or both of asparaginyl-tRNA or glutaminyl-tRNA synthetases. The reaction takes place in the presence of glutamine and ATP through an activated phospho-Asp-tRNA(Asn) or phospho-Glu-tRNA(Gln). In Chlorobium phaeobacteroides (strain BS1), this protein is Aspartyl/glutamyl-tRNA(Asn/Gln) amidotransferase subunit B.